The primary structure comprises 229 residues: Clathrin light chain (229 aa).

2 disordered regions span residues Met-1–Asn-24 and Glu-76–Glu-132. A compositionally biased stretch (basic and acidic residues) spans Glu-107–Glu-132. Position 229 is a phosphoserine (Ser-229).

This sequence belongs to the clathrin light chain family. In terms of assembly, clathrin coats are formed from molecules containing 3 heavy chains and 3 light chains.

It localises to the cytoplasmic vesicle membrane. The protein localises to the membrane. It is found in the coated pit. In terms of biological role, clathrin is the major protein of the polyhedral coat of coated pits and vesicles. The chain is Clathrin light chain (clc1) from Schizosaccharomyces pombe (strain 972 / ATCC 24843) (Fission yeast).